A 115-amino-acid polypeptide reads, in one-letter code: SOSS complex subunit C homolog (115 aa).

Belongs to the SOSS-C family.

This Drosophila mojavensis (Fruit fly) protein is SOSS complex subunit C homolog.